The chain runs to 518 residues: Protein MGF 505-6R (518 aa).

5 ANK repeats span residues S54–Y83, E129–V158, S261–G290, I292–N322, and K324–D351.

Belongs to the asfivirus MGF 505 family.

Plays a role in virus cell tropism, and may be required for efficient virus replication in macrophages. The chain is Protein MGF 505-6R from Ornithodoros (relapsing fever ticks).